The sequence spans 226 residues: ATP synthase subunit a (226 aa).

5 helical membrane passes run 17–37, 78–98, 104–124, 175–195, and 201–221; these read FLFV…AKLA, LVAT…IPGF, NINF…FEGI, LFVW…GFAL, and FLQT…AVLL.

Belongs to the ATPase A chain family. As to quaternary structure, F-type ATPases have 2 components, CF(1) - the catalytic core - and CF(0) - the membrane proton channel. CF(1) has five subunits: alpha(3), beta(3), gamma(1), delta(1), epsilon(1). CF(0) has three main subunits: a(1), b(2) and c(9-12). The alpha and beta chains form an alternating ring which encloses part of the gamma chain. CF(1) is attached to CF(0) by a central stalk formed by the gamma and epsilon chains, while a peripheral stalk is formed by the delta and b chains.

It localises to the cell inner membrane. Its function is as follows. Key component of the proton channel; it plays a direct role in the translocation of protons across the membrane. In Nitratiruptor sp. (strain SB155-2), this protein is ATP synthase subunit a.